The primary structure comprises 22 residues: thr operon leader peptide (22 aa).

The segment at 1 to 22 is disordered; that stretch reads MRNISLTTTIITTTDTTGNGAG. Over residues 7-22 the composition is skewed to low complexity; it reads TTTIITTTDTTGNGAG.

The protein belongs to the thr operon leader peptide family.

In terms of biological role, this protein is involved in control of the biosynthesis of threonine. This chain is thr operon leader peptide, found in Serratia marcescens.